Consider the following 92-residue polypeptide: Small ribosomal subunit protein uS19 (92 aa).

The protein belongs to the universal ribosomal protein uS19 family.

In terms of biological role, protein S19 forms a complex with S13 that binds strongly to the 16S ribosomal RNA. The protein is Small ribosomal subunit protein uS19 of Prochlorococcus marinus (strain MIT 9312).